A 156-amino-acid polypeptide reads, in one-letter code: Endoribonuclease YbeY (156 aa).

The Zn(2+) site is built by His117, His121, and His127.

Belongs to the endoribonuclease YbeY family. Zn(2+) is required as a cofactor.

Its subcellular location is the cytoplasm. Functionally, single strand-specific metallo-endoribonuclease involved in late-stage 70S ribosome quality control and in maturation of the 3' terminus of the 16S rRNA. The chain is Endoribonuclease YbeY from Shewanella pealeana (strain ATCC 700345 / ANG-SQ1).